A 212-amino-acid polypeptide reads, in one-letter code: ATP-dependent dethiobiotin synthetase BioD (212 aa).

ATP is bound at residue 10-15 (GVGKTF). Position 14 (threonine 14) interacts with Mg(2+). The active site involves lysine 36. Serine 40 provides a ligand contact to substrate. ATP-binding positions include aspartate 45, 106 to 109 (EGAG), and 167 to 168 (NC). Mg(2+) is bound by residues aspartate 45 and glutamate 106.

Belongs to the dethiobiotin synthetase family. In terms of assembly, homodimer. Mg(2+) is required as a cofactor.

Its subcellular location is the cytoplasm. It catalyses the reaction (7R,8S)-7,8-diammoniononanoate + CO2 + ATP = (4R,5S)-dethiobiotin + ADP + phosphate + 3 H(+). It participates in cofactor biosynthesis; biotin biosynthesis; biotin from 7,8-diaminononanoate: step 1/2. In terms of biological role, catalyzes a mechanistically unusual reaction, the ATP-dependent insertion of CO2 between the N7 and N8 nitrogen atoms of 7,8-diaminopelargonic acid (DAPA, also called 7,8-diammoniononanoate) to form a ureido ring. The polypeptide is ATP-dependent dethiobiotin synthetase BioD (Methanococcus aeolicus (strain ATCC BAA-1280 / DSM 17508 / OCM 812 / Nankai-3)).